The following is a 350-amino-acid chain: DNA polymerase IV (350 aa).

The region spanning 4–185 (IIHIDMDCFY…LPLGKLPGIG (182 aa)) is the UmuC domain. Residues aspartate 8 and aspartate 103 each coordinate Mg(2+). The active site involves glutamate 104.

It belongs to the DNA polymerase type-Y family. As to quaternary structure, monomer. Mg(2+) serves as cofactor.

Its subcellular location is the cytoplasm. The enzyme catalyses DNA(n) + a 2'-deoxyribonucleoside 5'-triphosphate = DNA(n+1) + diphosphate. Functionally, poorly processive, error-prone DNA polymerase involved in untargeted mutagenesis. Copies undamaged DNA at stalled replication forks, which arise in vivo from mismatched or misaligned primer ends. These misaligned primers can be extended by PolIV. Exhibits no 3'-5' exonuclease (proofreading) activity. May be involved in translesional synthesis, in conjunction with the beta clamp from PolIII. This is DNA polymerase IV from Aeromonas hydrophila subsp. hydrophila (strain ATCC 7966 / DSM 30187 / BCRC 13018 / CCUG 14551 / JCM 1027 / KCTC 2358 / NCIMB 9240 / NCTC 8049).